The chain runs to 290 residues: Ribosomal RNA small subunit methyltransferase A (290 aa).

Positions 27, 29, 54, 75, 100, and 125 each coordinate S-adenosyl-L-methionine.

The protein belongs to the class I-like SAM-binding methyltransferase superfamily. rRNA adenine N(6)-methyltransferase family. RsmA subfamily.

It localises to the cytoplasm. It catalyses the reaction adenosine(1518)/adenosine(1519) in 16S rRNA + 4 S-adenosyl-L-methionine = N(6)-dimethyladenosine(1518)/N(6)-dimethyladenosine(1519) in 16S rRNA + 4 S-adenosyl-L-homocysteine + 4 H(+). Its function is as follows. Specifically dimethylates two adjacent adenosines (A1518 and A1519) in the loop of a conserved hairpin near the 3'-end of 16S rRNA in the 30S particle. May play a critical role in biogenesis of 30S subunits. The protein is Ribosomal RNA small subunit methyltransferase A of Streptococcus thermophilus (strain ATCC BAA-491 / LMD-9).